The chain runs to 468 residues: uncharacterized protein (468 aa).

The disordered stretch occupies residues Met-1–Asn-22. Residues Cys-85–Arg-123 form an RING-type zinc finger. The span at Asp-386 to His-402 shows a compositional bias: low complexity. Positions Asp-386–Ser-468 are disordered. Residues Ile-417 to Arg-434 show a composition bias toward polar residues.

It localises to the nucleus. This is an uncharacterized protein from Schizosaccharomyces pombe (strain 972 / ATCC 24843) (Fission yeast).